Consider the following 102-residue polypeptide: Small ribosomal subunit protein uS10 (102 aa).

Belongs to the universal ribosomal protein uS10 family. As to quaternary structure, part of the 30S ribosomal subunit.

In terms of biological role, involved in the binding of tRNA to the ribosomes. The sequence is that of Small ribosomal subunit protein uS10 from Beijerinckia indica subsp. indica (strain ATCC 9039 / DSM 1715 / NCIMB 8712).